Consider the following 364-residue polypeptide: Dihydroorotate dehydrogenase (quinone) (364 aa).

Residues Ala62–Lys66 and Thr86 contribute to the FMN site. Residue Lys66 participates in substrate binding. Position 111-115 (Asn111–Phe115) interacts with substrate. FMN is bound by residues Asn142 and Asn175. A substrate-binding site is contributed by Asn175. The Nucleophile role is filled by Ser178. Asn180 is a binding site for substrate. The FMN site is built by Lys216 and Thr244. Asn245 to Thr246 contributes to the substrate binding site. FMN-binding positions include Gly267, Gly296, and Tyr317 to Thr318.

The protein belongs to the dihydroorotate dehydrogenase family. Type 2 subfamily. In terms of assembly, monomer. FMN serves as cofactor.

It is found in the cell membrane. The catalysed reaction is (S)-dihydroorotate + a quinone = orotate + a quinol. The protein operates within pyrimidine metabolism; UMP biosynthesis via de novo pathway; orotate from (S)-dihydroorotate (quinone route): step 1/1. Catalyzes the conversion of dihydroorotate to orotate with quinone as electron acceptor. This chain is Dihydroorotate dehydrogenase (quinone), found in Anaeromyxobacter dehalogenans (strain 2CP-1 / ATCC BAA-258).